Consider the following 293-residue polypeptide: MRFTATVLSRVATGLALGLSMATASLAETPVEALSETVARIEEQLGARVGLSLMETGTGWSWSHREDELFLMNSTVKVPVCGAILARWDAGRLSLSDALPVRKADLVPYAPVTETRVGGNMTLDELCLAAIDMSDNVAANILIGHLGGPEAVTQFFRSVGDPTSRLDRIEPKLNDFASGDERDTTSPAAMSETLRALLLGDVLSPEARGKLAEWMRHGGVTGALLRAEAEDAWLILDKSGSGSHTRNLVAVIQPEGGAPWIATMFISDTDAEFEVRNEALKDLGRAVVAVVRE.

Positions 1–27 (MRFTATVLSRVATGLALGLSMATASLA) are cleaved as a signal peptide. Catalysis depends on Ser-74, which acts as the Acyl-ester intermediate. 238-240 (KSG) contributes to the substrate binding site.

This sequence belongs to the class-A beta-lactamase family.

It is found in the periplasm. The catalysed reaction is a beta-lactam + H2O = a substituted beta-amino acid. In terms of biological role, hydrolyzes beta-lactams antibiotics. Rates of hydrolysis relative to benzylpenicillin =100: ampicillin = 27, carbenicillin = 25, cloxacillin = 0, cephaloridine = 4. The polypeptide is Beta-lactamase (Rhodobacter capsulatus (Rhodopseudomonas capsulata)).